Here is a 67-residue protein sequence, read N- to C-terminus: Large ribosomal subunit protein uL29 (67 aa).

It belongs to the universal ribosomal protein uL29 family.

This Wolbachia sp. subsp. Drosophila simulans (strain wRi) protein is Large ribosomal subunit protein uL29.